Here is a 286-residue protein sequence, read N- to C-terminus: MRLIVVSGQSGAGKSVALRVLEDLGYYCVDNLPVSLLTAFIQSVQGSQQNVAVSIDIRNLPKEPSLVQDVLDQLKQNNDVSMLFLDASKETLLKRYSETRRIHPLSLSQSKPSLAQAIELEKQLLGPLKEQADLLLDSSNQSLHELSETVRMRIEGRERKDLVMVFQSFGFKYGLPTDADYVFDVRFLPNPHWEPDLRPLTGLDAPIKSFLEGHSEVMELKQQIQKFFEYWLPMLEKNNRSYLTIAIGCTGGKHRSVYLTQQLGEYFAQLGHQVQLRHTSLEKQQS.

8–15 (GQSGAGKS) is an ATP binding site. Position 56–59 (56–59 (DIRN)) interacts with GTP.

It belongs to the RapZ-like family.

In terms of biological role, displays ATPase and GTPase activities. The chain is Nucleotide-binding protein VC_2532 from Vibrio cholerae serotype O1 (strain ATCC 39315 / El Tor Inaba N16961).